Reading from the N-terminus, the 290-residue chain is uncharacterized protein (290 aa).

The protein localises to the cell membrane. Its subcellular location is the membrane raft. This is an uncharacterized protein from Bacillus subtilis (strain 168).